We begin with the raw amino-acid sequence, 211 residues long: Ribosomal RNA small subunit methyltransferase G (211 aa).

Residues Gly81, Leu86, 132 to 133, and Arg147 contribute to the S-adenosyl-L-methionine site; that span reads AE.

Belongs to the methyltransferase superfamily. RNA methyltransferase RsmG family.

The protein resides in the cytoplasm. It carries out the reaction guanosine(527) in 16S rRNA + S-adenosyl-L-methionine = N(7)-methylguanosine(527) in 16S rRNA + S-adenosyl-L-homocysteine. Functionally, specifically methylates the N7 position of guanine in position 527 of 16S rRNA. The sequence is that of Ribosomal RNA small subunit methyltransferase G from Dichelobacter nodosus (strain VCS1703A).